The sequence spans 20 residues: Trypsin inhibitor A chain (20 aa).

Belongs to the protease inhibitor I3 (leguminous Kunitz-type inhibitor) family. In terms of assembly, heterodimer of an 'A' and a 'B' chain linked by a disulfide bond.

In terms of biological role, inhibits trypsin and alpha-chymotrypsin. The sequence is that of Trypsin inhibitor A chain from Albizia julibrissin (Silk tree).